The chain runs to 397 residues: Torsin-3A (397 aa).

The N-terminal stretch at 1–25 is a signal peptide; it reads MLRGPWRQLWLFFLLLLPGAPEPRG. The N-linked (GlcNAc...) asparagine glycan is linked to Asn-122. 167–174 contributes to the ATP binding site; the sequence is GWSGTGKN.

This sequence belongs to the ClpA/ClpB family. Torsin subfamily. May not form homohexamers. Post-translationally, N-glycosylated. As to expression, ubiquitously expressed. Highest expression in stomach, salivary glands and lymph nodes. Isoform 2 is expressed in placenta.

The protein localises to the cytoplasm. It is found in the endoplasmic reticulum lumen. This is Torsin-3A (TOR3A) from Homo sapiens (Human).